The sequence spans 567 residues: Phosphoglucomutase-like protein 5 (567 aa).

Residues 1–26 (MEGSPIPVLTVPTAPYEDQRPAGGGG) are disordered. A Phosphothreonine modification is found at Thr120. At Ser122 the chain carries Phosphoserine.

The protein belongs to the phosphohexose mutase family. As to quaternary structure, interacts with DMD/dystrophin; the interaction is direct. Interacts with UTRN/utrophin. In terms of tissue distribution, detected in smooth and cardiac muscle at high levels and in skeletal muscle at low level. Present in other tissues due to vascular or other smooth muscle component. Low levels are present in liver, kidney, skin and brain (at protein level).

It localises to the cell junction. The protein localises to the adherens junction. The protein resides in the cytoplasm. Its subcellular location is the cytoskeleton. It is found in the cell membrane. It localises to the sarcolemma. Its function is as follows. Component of adherens-type cell-cell and cell-matrix junctions. Has no phosphoglucomutase activity in vitro. In Homo sapiens (Human), this protein is Phosphoglucomutase-like protein 5.